A 78-amino-acid chain; its full sequence is UPF0291 protein Exig_1097 (78 aa).

The segment at 57-78 is disordered; it reads EEGTDVTPEKLKQAQEEERNKQ. Residues 63 to 78 show a composition bias toward basic and acidic residues; that stretch reads TPEKLKQAQEEERNKQ.

The protein belongs to the UPF0291 family.

It localises to the cytoplasm. The sequence is that of UPF0291 protein Exig_1097 from Exiguobacterium sibiricum (strain DSM 17290 / CCUG 55495 / CIP 109462 / JCM 13490 / 255-15).